The following is a 446-amino-acid chain: Probable glycine dehydrogenase (decarboxylating) subunit 1 (446 aa).

The protein belongs to the GcvP family. N-terminal subunit subfamily. The glycine cleavage system is composed of four proteins: P, T, L and H. In this organism, the P 'protein' is a heterodimer of two subunits.

The enzyme catalyses N(6)-[(R)-lipoyl]-L-lysyl-[glycine-cleavage complex H protein] + glycine + H(+) = N(6)-[(R)-S(8)-aminomethyldihydrolipoyl]-L-lysyl-[glycine-cleavage complex H protein] + CO2. In terms of biological role, the glycine cleavage system catalyzes the degradation of glycine. The P protein binds the alpha-amino group of glycine through its pyridoxal phosphate cofactor; CO(2) is released and the remaining methylamine moiety is then transferred to the lipoamide cofactor of the H protein. This is Probable glycine dehydrogenase (decarboxylating) subunit 1 from Coxiella burnetii (strain CbuK_Q154) (Coxiella burnetii (strain Q154)).